We begin with the raw amino-acid sequence, 516 residues long: Exodeoxyribonuclease 7 large subunit (516 aa).

The protein belongs to the XseA family. In terms of assembly, heterooligomer composed of large and small subunits.

The protein resides in the cytoplasm. It catalyses the reaction Exonucleolytic cleavage in either 5'- to 3'- or 3'- to 5'-direction to yield nucleoside 5'-phosphates.. Functionally, bidirectionally degrades single-stranded DNA into large acid-insoluble oligonucleotides, which are then degraded further into small acid-soluble oligonucleotides. The chain is Exodeoxyribonuclease 7 large subunit from Chlamydia trachomatis serovar L2 (strain ATCC VR-902B / DSM 19102 / 434/Bu).